The chain runs to 137 residues: SMR2 protein (137 aa).

The N-terminal stretch at 1-18 is a signal peptide; the sequence is MLVVLLTAALLALSSAQN. The tract at residues 14–113 is disordered; it reads SSAQNTDEEV…LHHRENLRPQ (100 aa). Positions 75-85 are enriched in low complexity; it reads QQQQPLPVENQ. The span at 99–110 shows a compositional bias: basic and acidic residues; sequence PPPETLHHRENL.

The protein localises to the secreted. Unknown, male-specific function. The chain is SMR2 protein (Smr2) from Rattus norvegicus (Rat).